The following is a 571-amino-acid chain: Proline--tRNA ligase (571 aa).

The protein belongs to the class-II aminoacyl-tRNA synthetase family. ProS type 1 subfamily. As to quaternary structure, homodimer.

Its subcellular location is the cytoplasm. The catalysed reaction is tRNA(Pro) + L-proline + ATP = L-prolyl-tRNA(Pro) + AMP + diphosphate. Functionally, catalyzes the attachment of proline to tRNA(Pro) in a two-step reaction: proline is first activated by ATP to form Pro-AMP and then transferred to the acceptor end of tRNA(Pro). As ProRS can inadvertently accommodate and process non-cognate amino acids such as alanine and cysteine, to avoid such errors it has two additional distinct editing activities against alanine. One activity is designated as 'pretransfer' editing and involves the tRNA(Pro)-independent hydrolysis of activated Ala-AMP. The other activity is designated 'posttransfer' editing and involves deacylation of mischarged Ala-tRNA(Pro). The misacylated Cys-tRNA(Pro) is not edited by ProRS. This Azotobacter vinelandii (strain DJ / ATCC BAA-1303) protein is Proline--tRNA ligase.